The following is a 143-amino-acid chain: Small ribosomal subunit protein uS9 (143 aa).

Positions 123-143 (RPEPKKFGGRGARSRFQKSYR) are disordered. The span at 134-143 (ARSRFQKSYR) shows a compositional bias: basic residues.

It belongs to the universal ribosomal protein uS9 family.

This Kluyveromyces lactis (strain ATCC 8585 / CBS 2359 / DSM 70799 / NBRC 1267 / NRRL Y-1140 / WM37) (Yeast) protein is Small ribosomal subunit protein uS9 (RPS16).